Here is a 671-residue protein sequence, read N- to C-terminus: MDSIEQQLTQLRTTLRHHEYLYHVMDAPEVPDAEYDRLMRELRELEAQHPELVTPDSPTQRVGAAPLASFSQVRHEVPMLSLDNVFDEESFLAFNKRVQDRLKSADTLTWCCELKLDGLAVSILYENGLLVRAATRGDGTTGEDITANVRTIRAIPLTLRGDNIPARLEVRGEVFLPQKGFEKINDEARRTGGKIFANPRNAAAGSLRQLDPRITAKRPLTFFCYGVGILEGGVLPDTHLGRLLQFKEWGLPVSNRVQLCDSPEAVLAFYHKVEEDRPSLGFDIDGVVIKVNSLALQEQLGFVARAPRWAVAFKFPAQEQMTFVRDVEFQVGRTGAITPVARLEPVQVAGVLVSNATLHNADEIARLGLRIGDKVVIRRAGDVIPQVVNVVESERPDDTREIVFPAHCPVCGSDVERVEGEVVTRCTGGLICGAQRKEALKHFVSRRALDVDGMGDKIIDQLVEKEYVHTPADLFRLSAGKLTGLDRMGPKSAQNVVNALEKAKETTFARFLYALGIREVGEATAAGLAAHFGTLEQLEKATIDDLQKVPDVGIVVATHVFNFFAEESNRDVIGKLLEEGIHWPAPVVINVEEIDSPFAGKTVVLTGSLSQMSRDDAKARLVAIGAKVAGSVSKKTDLVIAGEAAGSKLAKAQELGIDVIDEAEMLRLFGE.

Residues 32–36, 81–82, and E113 contribute to the NAD(+) site; these read DAEYD and SL. K115 serves as the catalytic N6-AMP-lysine intermediate. Residues R136, E173, K290, and K314 each coordinate NAD(+). Positions 408, 411, 426, and 432 each coordinate Zn(2+). The 79-residue stretch at 593 to 671 folds into the BRCT domain; that stretch reads EIDSPFAGKT…EAEMLRLFGE (79 aa).

Belongs to the NAD-dependent DNA ligase family. LigA subfamily. Requires Mg(2+) as cofactor. The cofactor is Mn(2+).

The enzyme catalyses NAD(+) + (deoxyribonucleotide)n-3'-hydroxyl + 5'-phospho-(deoxyribonucleotide)m = (deoxyribonucleotide)n+m + AMP + beta-nicotinamide D-nucleotide.. In terms of biological role, DNA ligase that catalyzes the formation of phosphodiester linkages between 5'-phosphoryl and 3'-hydroxyl groups in double-stranded DNA using NAD as a coenzyme and as the energy source for the reaction. It is essential for DNA replication and repair of damaged DNA. The sequence is that of DNA ligase from Enterobacter sp. (strain 638).